Reading from the N-terminus, the 74-residue chain is Guanine nucleotide-binding protein G(T) subunit gamma-T1 (74 aa).

At Cys71 the chain carries Cysteine methyl ester. Cys71 carries the S-farnesyl cysteine lipid modification. Positions 72–74 (VIS) are cleaved as a propeptide — removed in mature form.

Belongs to the G protein gamma family. As to quaternary structure, g proteins are composed of 3 units, alpha, beta and gamma. Retinal rod outer segment.

The protein localises to the cell membrane. Guanine nucleotide-binding proteins (G proteins) are involved as a modulator or transducer in various transmembrane signaling systems. The beta and gamma chains are required for the GTPase activity, for replacement of GDP by GTP, and for G protein-effector interaction. This is Guanine nucleotide-binding protein G(T) subunit gamma-T1 (Gngt1) from Mus musculus (Mouse).